Reading from the N-terminus, the 152-residue chain is UPF0311 protein blr7842 (152 aa).

The protein belongs to the UPF0311 family.

The chain is UPF0311 protein blr7842 from Bradyrhizobium diazoefficiens (strain JCM 10833 / BCRC 13528 / IAM 13628 / NBRC 14792 / USDA 110).